The following is a 211-amino-acid chain: Uracil phosphoribosyltransferase (211 aa).

30 to 34 (KGLVR) contacts GTP. 5-phospho-alpha-D-ribose 1-diphosphate contacts are provided by residues R79, R104, and 133–141 (DPMLATGTT). Residues I197 and 202–204 (GDA) contribute to the uracil site. D203 provides a ligand contact to 5-phospho-alpha-D-ribose 1-diphosphate.

Belongs to the UPRTase family. It depends on Mg(2+) as a cofactor.

The catalysed reaction is UMP + diphosphate = 5-phospho-alpha-D-ribose 1-diphosphate + uracil. It participates in pyrimidine metabolism; UMP biosynthesis via salvage pathway; UMP from uracil: step 1/1. Allosterically activated by GTP. Functionally, catalyzes the conversion of uracil and 5-phospho-alpha-D-ribose 1-diphosphate (PRPP) to UMP and diphosphate. This chain is Uracil phosphoribosyltransferase, found in Pyrobaculum arsenaticum (strain DSM 13514 / JCM 11321 / PZ6).